A 136-amino-acid chain; its full sequence is Large ribosomal subunit protein uL16 (136 aa).

The protein belongs to the universal ribosomal protein uL16 family. Part of the 50S ribosomal subunit.

Its function is as follows. Binds 23S rRNA and is also seen to make contacts with the A and possibly P site tRNAs. The chain is Large ribosomal subunit protein uL16 from Orientia tsutsugamushi (strain Ikeda) (Rickettsia tsutsugamushi).